Here is a 461-residue protein sequence, read N- to C-terminus: Argininosuccinate lyase (461 aa).

It belongs to the lyase 1 family. Argininosuccinate lyase subfamily.

The protein localises to the cytoplasm. It catalyses the reaction 2-(N(omega)-L-arginino)succinate = fumarate + L-arginine. It participates in amino-acid biosynthesis; L-arginine biosynthesis; L-arginine from L-ornithine and carbamoyl phosphate: step 3/3. This Nitrosomonas eutropha (strain DSM 101675 / C91 / Nm57) protein is Argininosuccinate lyase.